The following is a 245-amino-acid chain: Uridylate kinase (245 aa).

15 to 18 (KLSG) is an ATP binding site. The involved in allosteric activation by GTP stretch occupies residues 23 to 28 (GDEGFG). Position 57 (G57) interacts with UMP. ATP-binding residues include G58 and R62. UMP is bound by residues D77 and 138–145 (TGNPFCTT). ATP is bound by residues T165, Y171, and D174.

It belongs to the UMP kinase family. Homohexamer.

The protein localises to the cytoplasm. The catalysed reaction is UMP + ATP = UDP + ADP. It functions in the pathway pyrimidine metabolism; CTP biosynthesis via de novo pathway; UDP from UMP (UMPK route): step 1/1. With respect to regulation, allosterically activated by GTP. Inhibited by UTP. Catalyzes the reversible phosphorylation of UMP to UDP. This Shewanella sp. (strain W3-18-1) protein is Uridylate kinase.